The sequence spans 268 residues: Phosphatidylglycerol--prolipoprotein diacylglyceryl transferase (268 aa).

3 consecutive transmembrane segments (helical) span residues F16 to L36, I56 to G76, and G92 to V112. R136 contacts a 1,2-diacyl-sn-glycero-3-phospho-(1'-sn-glycerol). 3 helical membrane passes run P175 to F195, G204 to L224, and I236 to Y256.

This sequence belongs to the Lgt family.

Its subcellular location is the cell inner membrane. The enzyme catalyses L-cysteinyl-[prolipoprotein] + a 1,2-diacyl-sn-glycero-3-phospho-(1'-sn-glycerol) = an S-1,2-diacyl-sn-glyceryl-L-cysteinyl-[prolipoprotein] + sn-glycerol 1-phosphate + H(+). It participates in protein modification; lipoprotein biosynthesis (diacylglyceryl transfer). Catalyzes the transfer of the diacylglyceryl group from phosphatidylglycerol to the sulfhydryl group of the N-terminal cysteine of a prolipoprotein, the first step in the formation of mature lipoproteins. The sequence is that of Phosphatidylglycerol--prolipoprotein diacylglyceryl transferase from Thermosynechococcus vestitus (strain NIES-2133 / IAM M-273 / BP-1).